A 395-amino-acid chain; its full sequence is Protein phosphatase methylesterase 1 (395 aa).

Catalysis depends on residues Ser194, Asp222, and His348.

This sequence belongs to the AB hydrolase superfamily.

The catalysed reaction is [phosphatase 2A protein]-C-terminal L-leucine methyl ester + H2O = [phosphatase 2A protein]-C-terminal L-leucine + methanol + H(+). Demethylates proteins that have been reversibly carboxymethylated. Demethylates the phosphatase PP2A catalytic subunit. The protein is Protein phosphatase methylesterase 1 (PPE1) of Kluyveromyces lactis (strain ATCC 8585 / CBS 2359 / DSM 70799 / NBRC 1267 / NRRL Y-1140 / WM37) (Yeast).